The following is a 118-amino-acid chain: Large ribosomal subunit protein uL18 (118 aa).

The tract at residues 1 to 24 is disordered; sequence MISKPDKNKTRQRRHARVRGKISG. Over residues 10-20 the composition is skewed to basic residues; that stretch reads TRQRRHARVRG.

It belongs to the universal ribosomal protein uL18 family. In terms of assembly, part of the 50S ribosomal subunit; part of the 5S rRNA/L5/L18/L25 subcomplex. Contacts the 5S and 23S rRNAs.

This is one of the proteins that bind and probably mediate the attachment of the 5S RNA into the large ribosomal subunit, where it forms part of the central protuberance. The sequence is that of Large ribosomal subunit protein uL18 from Lactiplantibacillus plantarum (strain ATCC BAA-793 / NCIMB 8826 / WCFS1) (Lactobacillus plantarum).